The sequence spans 635 residues: Sodium- and chloride-dependent transporter XTRP3B (635 aa).

Residues 1 to 38 (MESPSAHAVSLPEDEELQPWGGAGGPGQHPGRPRSTEC) form a disordered region. Residues 1-56 (MESPSAHAVSLPEDEELQPWGGAGGPGQHPGRPRSTECAHPGVVEKVRPKWDNPLQ) are Cytoplasmic-facing. The helical transmembrane segment at 57 to 77 (FLLVCISYAVGLGNVWRFPYL) threads the bilayer. Over 78–85 (CQMYGGGN) the chain is Extracellular. The chain crosses the membrane as a helical span at residues 86 to 106 (FLVPYIIMLIVEGMPLLYLEL). Residues 107–127 (AVGQRMRQGSIGAWRTISPYL) lie on the Cytoplasmic side of the membrane. The helical transmembrane segment at 128–148 (SGVGIASLVVSFLASVYFNVI) threads the bilayer. Residues 149–208 (NTWALWYLFHSFQDPLPWSVCPLNSNHTGYDEECEKASSTQYFWYRKTLNISPSIQENGG) are Extracellular-facing. N174 carries N-linked (GlcNAc...) asparagine glycosylation. A helical transmembrane segment spans residues 209–229 (VQWEPALCLTLAWLMVYLCIL). At 230-237 (RGTESTGK) the chain is on the cytoplasmic side. The helical transmembrane segment at 238–258 (VVYFTTSLPYFVLIIYLVRGL) threads the bilayer. The Extracellular segment spans residues 259-284 (TLHGATNGLAYMFTPKIEQLANPKAW). A helical membrane pass occupies residues 285 to 305 (INAATQIFFSLGLGCGGLIAF). Residues 306–319 (ASYNEPSNDCQKHA) lie on the Cytoplasmic side of the membrane. A helical membrane pass occupies residues 320–340 (LIVSVINSTTAIFSSIVTFSI). Topologically, residues 341–432 (YGFKATFNYE…EAIKNMEVSQ (92 aa)) are extracellular. A glycan (N-linked (GlcNAc...) asparagine) is linked at N400. Residues 433–453 (LWSVLYFFMLLTLGMGSMVGT) traverse the membrane as a helical segment. Topologically, residues 454–474 (GTAILTPLTDSKIISSYLPKE) are cytoplasmic. The helical transmembrane segment at 475-495 (AISGLVCLLNCAIGMVFTMEA) threads the bilayer. The Extracellular segment spans residues 496 to 508 (GNYWFDLFNDYTA). A helical transmembrane segment spans residues 509 to 529 (TLSLLLIVLVETIAVCYVYGL). Topologically, residues 530–547 (KRFESDLRAMTGRTLSWY) are cytoplasmic. Residues 548–568 (WKVMWAFVSPLLIVGLFIFYL) form a helical membrane-spanning segment. Over 569 to 597 (SDYILTGTLQYQAWDATQGHVVTKDYPTY) the chain is Extracellular. Residues 598–618 (ALAVIGLLVASSTMCIPLVAL) form a helical membrane-spanning segment. The Cytoplasmic segment spans residues 619–635 (GTFVTRHFKIREQFSAA).

The protein belongs to the sodium:neurotransmitter symporter (SNF) (TC 2.A.22) family. SLC6A20 subfamily. In terms of assembly, interacts with CLTRN. In terms of tissue distribution, detected only in kidney and lung.

The protein resides in the apical cell membrane. Its function is as follows. Does not show transporter activity with a range of tested amino acids including proline, glutamine, glutamic acid, leucine, alanine, histidine, glycine and arginine. This Mus musculus (Mouse) protein is Sodium- and chloride-dependent transporter XTRP3B (Slc6a20b).